The primary structure comprises 332 residues: MKLSIDNKKHVIFSLSKSKTLVENICKKLNISEGKMVCEHFADGETYIRFDESVRNKDIYIFQSTCPNVNDSLMELLIAIDALKRGSAKSITAILPYYGYARQDRKTKGREPITSKLIADMLTKAGANRVVLTDIHSDQTQGFFDIPVDSLRTYHIFLFRVIELLGKKDLVVVSPDYGGVKRARLIANTLELPLAIIDKRRPSHNVAESINVLGEVKNKNCLIVDDMIDTGGTVIAAAKLLQKEQAKKVCVMATHGLFNNDAEQKFMEAFDQKLIDFLFVSNSIPQYKFKAVKQFEVVDLASLYEEVVLCYANSLSVSAIYERHIEWIKKHV.

ATP is bound by residues 43–45 (DGE) and 102–103 (RQ). Residues H136 and D176 each coordinate Mg(2+). K199 is a catalytic residue. Residues R201, D225, and 229–233 (DTGGT) each bind D-ribose 5-phosphate.

Belongs to the ribose-phosphate pyrophosphokinase family. Class I subfamily. Homohexamer. Mg(2+) is required as a cofactor.

It localises to the cytoplasm. It catalyses the reaction D-ribose 5-phosphate + ATP = 5-phospho-alpha-D-ribose 1-diphosphate + AMP + H(+). The protein operates within metabolic intermediate biosynthesis; 5-phospho-alpha-D-ribose 1-diphosphate biosynthesis; 5-phospho-alpha-D-ribose 1-diphosphate from D-ribose 5-phosphate (route I): step 1/1. Functionally, involved in the biosynthesis of the central metabolite phospho-alpha-D-ribosyl-1-pyrophosphate (PRPP) via the transfer of pyrophosphoryl group from ATP to 1-hydroxyl of ribose-5-phosphate (Rib-5-P). The polypeptide is Ribose-phosphate pyrophosphokinase (Mycoplasma genitalium (strain ATCC 33530 / DSM 19775 / NCTC 10195 / G37) (Mycoplasmoides genitalium)).